A 572-amino-acid chain; its full sequence is Neuronal acetylcholine receptor subunit alpha-9-I (572 aa).

The N-terminal stretch at 1–19 (MKTVVLLTWISCWIDVCTS) is a signal peptide. Residues 20–232 (AQGRYAQKLL…YTLHLKRRSL (213 aa)) lie on the Extracellular side of the membrane. An N-linked (GlcNAc...) asparagine glycan is attached at Asn51. Cys149 and Cys163 form a disulfide bridge. N-linked (GlcNAc...) asparagine glycosylation is present at Asn164. Cys213 and Cys214 are joined by a disulfide. The next 3 helical transmembrane spans lie at 233–253 (FYIFNLLLPCFLISFLAPLGF), 263–283 (VSLGVTVLLALTVFQLMVAES), and 297–317 (YIATMTMITASTSLTIFIMNI). The Cytoplasmic portion of the chain corresponds to 318–550 (HFCGAEAKPV…WKKVAKVMDR (233 aa)). Residues 405–458 (GHLQNHHSTHQNHLDNCRYANGGHRDDHYSNRSNQNHHSNRSQTSKGEGGEEKR) are disordered. Residues 435-447 (NRSNQNHHSNRSQ) are compositionally biased toward low complexity. Residues 551–571 (FFMWIFFIMVFLMSILIIGKA) traverse the membrane as a helical segment.

It belongs to the ligand-gated ion channel (TC 1.A.9) family. Acetylcholine receptor (TC 1.A.9.1) subfamily. As to expression, expressed in the liver, olfactory mucosa, pituitary gland, hair cells of the saccule and spleen.

Its subcellular location is the postsynaptic cell membrane. It localises to the cell membrane. The protein is Neuronal acetylcholine receptor subunit alpha-9-I (nachra9) of Oncorhynchus mykiss (Rainbow trout).